The primary structure comprises 136 residues: ATP synthase epsilon chain (136 aa).

It belongs to the ATPase epsilon chain family. In terms of assembly, F-type ATPases have 2 components, CF(1) - the catalytic core - and CF(0) - the membrane proton channel. CF(1) has five subunits: alpha(3), beta(3), gamma(1), delta(1), epsilon(1). CF(0) has three main subunits: a, b and c.

It is found in the cell inner membrane. Functionally, produces ATP from ADP in the presence of a proton gradient across the membrane. The polypeptide is ATP synthase epsilon chain (Myxococcus xanthus (strain DK1622)).